A 98-amino-acid chain; its full sequence is MQFSLALVTLLATAVSALPTEEKRQAYIPCSGLYGTSQCCATDVLGVADLDCGNPPSTPANATDFSAVCSAIGQRARCCVLPILDQGILCNTPTGVQD.

An N-terminal signal peptide occupies residues 1 to 17; the sequence is MQFSLALVTLLATAVSA. Intrachain disulfides connect Cys-30-Cys-78, Cys-39-Cys-69, Cys-40-Cys-52, and Cys-79-Cys-90.

Belongs to the cerato-ulmin hydrophobin family.

It localises to the secreted. The protein resides in the cell wall. In terms of biological role, aerial growth, conidiation, and dispersal of filamentous fungi in the environment rely upon a capability of their secreting small amphipathic proteins called hydrophobins (HPBs) with low sequence identity. Class I can self-assemble into an outermost layer of rodlet bundles on aerial cell surfaces, conferring cellular hydrophobicity that supports fungal growth, development and dispersal; whereas Class II form highly ordered films at water-air interfaces through intermolecular interactions but contribute nothing to the rodlet structure. Does not seem to be important for the ability to cause seedling disease. This Gibberella moniliformis (Maize ear and stalk rot fungus) protein is Class II hydrophobin 5.